A 765-amino-acid chain; its full sequence is Protein PAT1 homolog 1 (765 aa).

Disordered stretches follow at residues 1–98 (MFRF…DERG), 119–147 (GVGS…LAGP), and 210–244 (LPNR…SPPV). Positions 7 to 30 (LDDDCTLEEEEGLVEEEDEIDQFN) are enriched in acidic residues. Basic and acidic residues predominate over residues 45-59 (EEHTRLAELDERVRD). Residues 218–227 (SRDEGRDLSE) show a composition bias toward basic and acidic residues. 2 positions are modified to phosphoserine: S235 and S236. A compositionally biased stretch (low complexity) spans 235-244 (SSPVIGSPPV).

Belongs to the PAT1 family. Interacts with ribonucleoprotein complex components.

The protein localises to the cytoplasm. The protein resides in the P-body. It is found in the nucleus. Its subcellular location is the PML body. It localises to the nucleus speckle. RNA-binding protein involved in deadenylation-dependent decapping of mRNAs, leading to the degradation of mRNAs. Acts as a scaffold protein that connects deadenylation and decapping machinery. Required for cytoplasmic mRNA processing body (P-body) assembly. The polypeptide is Protein PAT1 homolog 1 (patl1) (Danio rerio (Zebrafish)).